The chain runs to 345 residues: Phosphoribosylformylglycinamidine cyclo-ligase (345 aa).

Belongs to the AIR synthase family.

The protein localises to the cytoplasm. It carries out the reaction 2-formamido-N(1)-(5-O-phospho-beta-D-ribosyl)acetamidine + ATP = 5-amino-1-(5-phospho-beta-D-ribosyl)imidazole + ADP + phosphate + H(+). It functions in the pathway purine metabolism; IMP biosynthesis via de novo pathway; 5-amino-1-(5-phospho-D-ribosyl)imidazole from N(2)-formyl-N(1)-(5-phospho-D-ribosyl)glycinamide: step 2/2. The protein is Phosphoribosylformylglycinamidine cyclo-ligase of Mannheimia succiniciproducens (strain KCTC 0769BP / MBEL55E).